Reading from the N-terminus, the 366-residue chain is Transmembrane protein 26 (366 aa).

The next 3 membrane-spanning stretches (helical) occupy residues 4 to 24 (LVLL…LVAV), 36 to 56 (YWLL…TLKF), and 64 to 84 (WLSP…WLLE). A glycan (N-linked (GlcNAc...) asparagine) is linked at N110. The next 5 helical transmembrane spans lie at 138–158 (MVCE…ILII), 176–196 (ELLL…TETL), 208–228 (VSGI…DLAV), 258–278 (IGLS…VLMI), and 282–302 (VINH…ALHF). Residues 319-329 (HPESPKPEHSG) are compositionally biased toward basic and acidic residues. Residues 319–366 (HPESPKPEHSGPDQPSESGPSEWEDASPEALPLRTSPVTSEESYPTTP) are disordered. A compositionally biased stretch (polar residues) spans 354 to 366 (SPVTSEESYPTTP).

It is found in the membrane. The protein is Transmembrane protein 26 (Tmem26) of Mus musculus (Mouse).